The chain runs to 146 residues: Hemoglobin subunit beta (146 aa).

Valine 1 bears the N-acetylvaline mark. A Globin domain is found at histidine 2–histidine 146. Threonine 12 bears the Phosphothreonine mark. Serine 44 is modified (phosphoserine). Residue lysine 59 is modified to N6-acetyllysine. Residue histidine 63 coordinates heme b. Lysine 82 carries the N6-acetyllysine modification. Histidine 92 contacts heme b. An S-nitrosocysteine modification is found at cysteine 93. An N6-acetyllysine modification is found at lysine 144.

This sequence belongs to the globin family. As to quaternary structure, heterotetramer of two alpha chains and two beta chains. As to expression, red blood cells.

In terms of biological role, involved in oxygen transport from the lung to the various peripheral tissues. This chain is Hemoglobin subunit beta (HBB), found in Cercocebus atys (Sooty mangabey).